A 240-amino-acid polypeptide reads, in one-letter code: Sulfite dehydrogenase subunit B (240 aa).

4Fe-4S ferredoxin-type domains follow at residues 4–34, 64–95, and 97–126; these read LALV…WAGP, TETV…KRPD, and GVVL…LDAQ. 12 residues coordinate [4Fe-4S] cluster: Cys13, Cys16, Cys19, Cys23, Cys73, Cys76, Cys81, Cys85, Cys106, Cys109, Cys112, and Cys116.

Forms a heterotrimeric membrane-bound complex composed of a catalytic heterodimer (SoeAB) and a membrane anchor protein (SoeC). [4Fe-4S] cluster is required as a cofactor.

The protein localises to the cell inner membrane. Part of the SoeABC complex that catalyzes the oxidation of sulfite to sulfate. SoeB is probably the electron transfer subunit. This Allochromatium vinosum (strain ATCC 17899 / DSM 180 / NBRC 103801 / NCIMB 10441 / D) (Chromatium vinosum) protein is Sulfite dehydrogenase subunit B.